The primary structure comprises 443 residues: Threonine/serine transporter TdcC (443 aa).

Transmembrane regions (helical) follow at residues 22-42 (TTWTLGLFGTAIGAGVLFFPI), 44-64 (AGFGGLIPILLMLVLAYPIAF), 97-117 (GVVITFLYFFAICPLLWIYGV), 140-160 (FVALFLLLLMAFVIWFGKDLM), 163-183 (VMSYLVWPFIASLVLISLSLI), 207-227 (ILVTVWLGISIMVFSFNFSPI), 259-279 (ASMLMVAVVMFFAFSCLFTLS), 319-339 (ASIIALVAIFKSFFGHYLGTL), 366-386 (ISMIFIMGSTWVVAYANPNIL), 389-409 (IEAMGAPIIASLLCLLPMYAI), and 423-443 (DNVFVTLIGLLTILNIVYKLF).

The protein belongs to the amino acid/polyamine transporter 2 family. SdaC/TdcC subfamily.

The protein resides in the cell inner membrane. It carries out the reaction L-threonine(in) + H(+)(in) = L-threonine(out) + H(+)(out). The enzyme catalyses L-serine(in) + H(+)(in) = L-serine(out) + H(+)(out). Involved in the import of threonine and serine into the cell, with the concomitant import of a proton (symport system). This chain is Threonine/serine transporter TdcC, found in Salmonella paratyphi A (strain ATCC 9150 / SARB42).